We begin with the raw amino-acid sequence, 230 residues long: Small ribosomal subunit protein uS3 (230 aa).

A KH type-2 domain is found at 39–107 (VRKFLVEKLQ…PAQINIAEIR (69 aa)).

It belongs to the universal ribosomal protein uS3 family. In terms of assembly, part of the 30S ribosomal subunit. Forms a tight complex with proteins S10 and S14.

Its function is as follows. Binds the lower part of the 30S subunit head. Binds mRNA in the 70S ribosome, positioning it for translation. The protein is Small ribosomal subunit protein uS3 of Shewanella baltica (strain OS223).